We begin with the raw amino-acid sequence, 668 residues long: DNA ligase (668 aa).

NAD(+) contacts are provided by residues 37 to 41 (DAVYD), 86 to 87 (SM), and E116. K118 functions as the N6-AMP-lysine intermediate in the catalytic mechanism. Residues R139, E173, K288, and K312 each contribute to the NAD(+) site. Zn(2+) is bound by residues C406, C409, C424, and C429. One can recognise a BRCT domain in the interval 590-668 (APDNFFKEKT…EQEAIAKIEK (79 aa)).

This sequence belongs to the NAD-dependent DNA ligase family. LigA subfamily. Mg(2+) is required as a cofactor. The cofactor is Mn(2+).

The catalysed reaction is NAD(+) + (deoxyribonucleotide)n-3'-hydroxyl + 5'-phospho-(deoxyribonucleotide)m = (deoxyribonucleotide)n+m + AMP + beta-nicotinamide D-nucleotide.. Its function is as follows. DNA ligase that catalyzes the formation of phosphodiester linkages between 5'-phosphoryl and 3'-hydroxyl groups in double-stranded DNA using NAD as a coenzyme and as the energy source for the reaction. It is essential for DNA replication and repair of damaged DNA. This chain is DNA ligase, found in Lactobacillus johnsonii (strain CNCM I-12250 / La1 / NCC 533).